Reading from the N-terminus, the 236-residue chain is SERTA domain-containing protein 1 (236 aa).

The region spanning 38-85 is the SERTA domain; it reads PTVASSSLFDLSVVKLHHSLRQSEPDLRHLVLVVNTLRRIQASMEPAP. The segment at 190–211 is disordered; sequence ASEGLKPGPENGPAKEEPPELD.

As to quaternary structure, interacts with the PHD-bromodomain of TIF1, TRIM28/TIF1B and p300/CBP. Interacts with E2F1 and TFDP1; modulates transactivation activity of TFDP1/E2F complexes. Also interacts with CDK4. Post-translationally, polyubiquitinated, which promotes proteasomal degradation. In terms of tissue distribution, detected at in testis, lung and, at lower levels, in muscle, liver, spleen, brain and heart.

Acts at E2F-responsive promoters as coregulator to integrate signals provided by PHD- and/or bromodomain-containing transcription factors. Stimulates E2F1/TFDP1 transcriptional activity. Renders the activity of cyclin D1/CDK4 resistant to the inhibitory effects of CDKN2A/p16INK4A. In Mus musculus (Mouse), this protein is SERTA domain-containing protein 1 (Sertad1).